The following is a 156-amino-acid chain: Small ribosomal subunit protein uS7 (156 aa).

Belongs to the universal ribosomal protein uS7 family. Part of the 30S ribosomal subunit. Contacts proteins S9 and S11.

In terms of biological role, one of the primary rRNA binding proteins, it binds directly to 16S rRNA where it nucleates assembly of the head domain of the 30S subunit. Is located at the subunit interface close to the decoding center, probably blocks exit of the E-site tRNA. In Pectobacterium atrosepticum (strain SCRI 1043 / ATCC BAA-672) (Erwinia carotovora subsp. atroseptica), this protein is Small ribosomal subunit protein uS7.